The following is a 253-amino-acid chain: Peptidase inhibitor R3HDML (253 aa).

A signal peptide spans 1-23; that stretch reads MPLLSSIVGLTGLLLWMGHTVGA. A propeptide spanning residues 24–56 is cleaved from the precursor; it reads LRMPNTTLVQGRPKNTAVWPLSGLGVPRHRRKR. Asn-28 and Asn-120 each carry an N-linked (GlcNAc...) asparagine glycan. An SCP domain is found at 67–207; that stretch reads LDYHNHIRAS…QQAVYLVCNY (141 aa).

This sequence belongs to the CRISP family.

Its subcellular location is the secreted. In terms of biological role, putative serine protease inhibitor. The chain is Peptidase inhibitor R3HDML (R3hdml) from Mus musculus (Mouse).